Reading from the N-terminus, the 403-residue chain is Chromatin structure-remodeling complex subunit SFH1 (403 aa).

The segment at 58–115 (FPTFDIDSDSNDEEQSSASAGNDDPQANANGGEAAGVNGQGSGDGGSANTGAGRHGKS) is disordered. Acidic residues predominate over residues 63-72 (IDSDSNDEEQ). Residues 84-94 (ANANGGEAAGV) show a composition bias toward low complexity. The span at 95 to 105 (NGQGSGDGGSA) shows a compositional bias: gly residues.

The protein belongs to the SNF5 family.

The protein resides in the nucleus. Functionally, part of the chromatin structure-remodeling complex (RSC) which is involved in transcription regulation and nucleosome positioning. RSC is responsible for the transfer of a histone octamer from a nucleosome core particle to naked DNA. The reaction requires ATP and involves an activated RSC-nucleosome intermediate. Remodeling reaction also involves DNA translocation, DNA twist and conformational change. As a reconfigurer of centromeric and flanking nucleosomes, RSC complex is required both for proper kinetochore function in chromosome segregation and, via a PKC1-dependent signaling pathway, for organization of the cellular cytoskeleton. This subunit is essential for mitotic growth and required for cell cycle progression. The chain is Chromatin structure-remodeling complex subunit SFH1 (SFH1) from Candida glabrata (strain ATCC 2001 / BCRC 20586 / JCM 3761 / NBRC 0622 / NRRL Y-65 / CBS 138) (Yeast).